The sequence spans 26 residues: Glycyl-poneratoxin (26 aa).

Arginine amide; in delta-paraponeritoxin-Pc1a is present on Arg25.

Post-translationally, the glycine-PoTx is a non-amidated form of poneratoxin, with an extra-Gly at C-terminus. This loss of amidation does not alter toxin activity on Nav1.7/SCN9A. Expressed by the venom gland.

The protein resides in the secreted. Its function is as follows. Toxin that causes pain in vertebrates by targeting tetrodotoxin (TTX)-sensitive sodium channels in peripheral sensory neurons. Also blocks synaptic transmission and stimulates smooth muscle contraction. Converts the normally rapidly activating and inactivating sodium channel current into one that does not inactivate. Is active on both Nav1.6/SCN8A and Nav1.7/SCN9A sodium channels, with a much potent activity on Nav1.6/SCN8A (EC(50)=97 nM on human channels) than on Nav1.7/SCN9A (EC(50)=2.3 uM on human and EC(50)=1.8 uM on mouse channels). On these channels, causes a sustained current, a reduction in peak current amplitude and a hyperpolarising shift. Modulates Nav1.7/SCN9A in a non-competitive manner with TTX or tetracaine. Toxin-induced persistant current is very slowly reversible with repeated wash steps over 30 minutes. In vivo, shallow intraplantar injection in mice causes immediate, long-lasting and near-maximal nocifensive behaviors, which decrease with coinjection of TTX. When tested on insects, causes paralysis but not mortality at high doses. This Paraponera clavata (Bullet ant) protein is Glycyl-poneratoxin.